A 157-amino-acid polypeptide reads, in one-letter code: MIRIGQGYDVHKLAYDRELIVGGIKIPYEKGLLGHSDADVLLHAITDAIIGAIGAGDIGHFFPDTDMAFKDADSAELLEEIWQKVEADGFRLGNLDATIIAEKPKMAPYVEQMKLRIAELLHADSAQVNVKATTTEKLGFTGRKEGIASLAVVLLEK.

A divalent metal cation-binding residues include Asp-9 and His-11. 4-CDP-2-C-methyl-D-erythritol 2-phosphate contacts are provided by residues 9 to 11 (DVH) and 35 to 36 (HS). His-43 serves as a coordination point for a divalent metal cation. 4-CDP-2-C-methyl-D-erythritol 2-phosphate is bound by residues 57–59 (DIG), 62–66 (FPDTD), 101–107 (AEKPKMA), 133–136 (TTTE), Phe-140, and Arg-143.

It belongs to the IspF family. As to quaternary structure, homotrimer. The cofactor is a divalent metal cation.

It catalyses the reaction 4-CDP-2-C-methyl-D-erythritol 2-phosphate = 2-C-methyl-D-erythritol 2,4-cyclic diphosphate + CMP. It participates in isoprenoid biosynthesis; isopentenyl diphosphate biosynthesis via DXP pathway; isopentenyl diphosphate from 1-deoxy-D-xylulose 5-phosphate: step 4/6. Functionally, involved in the biosynthesis of isopentenyl diphosphate (IPP) and dimethylallyl diphosphate (DMAPP), two major building blocks of isoprenoid compounds. Catalyzes the conversion of 4-diphosphocytidyl-2-C-methyl-D-erythritol 2-phosphate (CDP-ME2P) to 2-C-methyl-D-erythritol 2,4-cyclodiphosphate (ME-CPP) with a corresponding release of cytidine 5-monophosphate (CMP). This Listeria monocytogenes serotype 4b (strain CLIP80459) protein is 2-C-methyl-D-erythritol 2,4-cyclodiphosphate synthase.